Here is a 118-residue protein sequence, read N- to C-terminus: Protein TusC (118 aa).

This sequence belongs to the DsrF/TusC family. In terms of assembly, heterohexamer, formed by a dimer of trimers. The hexameric TusBCD complex contains 2 copies each of TusB, TusC and TusD. The TusBCD complex interacts with TusE.

The protein resides in the cytoplasm. Functionally, part of a sulfur-relay system required for 2-thiolation of 5-methylaminomethyl-2-thiouridine (mnm(5)s(2)U) at tRNA wobble positions. This chain is Protein TusC, found in Salmonella arizonae (strain ATCC BAA-731 / CDC346-86 / RSK2980).